The chain runs to 76 residues: Acyl carrier protein (76 aa).

Positions 1 to 76 constitute a Carrier domain; it reads MSIEERVKKI…SAIDYVQNNQ (76 aa). The residue at position 36 (Ser36) is an O-(pantetheine 4'-phosphoryl)serine.

This sequence belongs to the acyl carrier protein (ACP) family. 4'-phosphopantetheine is transferred from CoA to a specific serine of apo-ACP by AcpS. This modification is essential for activity because fatty acids are bound in thioester linkage to the sulfhydryl of the prosthetic group.

It localises to the cytoplasm. It participates in lipid metabolism; fatty acid biosynthesis. Its function is as follows. Carrier of the growing fatty acid chain in fatty acid biosynthesis. This Histophilus somni (strain 129Pt) (Haemophilus somnus) protein is Acyl carrier protein.